The primary structure comprises 429 residues: Adenylosuccinate synthetase (429 aa).

Residues 15-21 and 43-45 each bind GTP; these read GDEGKGK and GHV. Asp16 serves as the catalytic Proton acceptor. Mg(2+) contacts are provided by Asp16 and Gly43. IMP contacts are provided by residues 16 to 19, 41 to 44, Thr131, Arg145, Gln225, Thr240, and Arg304; these read DEGK and NAGH. His44 (proton donor) is an active-site residue. A substrate-binding site is contributed by 300–306; sequence SNTKRPR. Residues Arg306, 332-334, and 414-416 contribute to the GTP site; these read LLD and SVG.

This sequence belongs to the adenylosuccinate synthetase family. In terms of assembly, homodimer. The cofactor is Mg(2+).

Its subcellular location is the cytoplasm. The catalysed reaction is IMP + L-aspartate + GTP = N(6)-(1,2-dicarboxyethyl)-AMP + GDP + phosphate + 2 H(+). It participates in purine metabolism; AMP biosynthesis via de novo pathway; AMP from IMP: step 1/2. In terms of biological role, plays an important role in the de novo pathway of purine nucleotide biosynthesis. Catalyzes the first committed step in the biosynthesis of AMP from IMP. The chain is Adenylosuccinate synthetase from Mesoplasma florum (strain ATCC 33453 / NBRC 100688 / NCTC 11704 / L1) (Acholeplasma florum).